Here is a 129-residue protein sequence, read N- to C-terminus: MAKKTNTRKRRQRKNVETGVAHIRSTFNNTIVTITDPHGNAISWASAGALGFKGSRKSTPFAAQMAAETAAKAAMEHGMKSIEVSVKGPGAGREAAIRSLQAVGLEVNMIKDVTPVPHNGCRPPKRRRV.

Belongs to the universal ribosomal protein uS11 family. As to quaternary structure, part of the 30S ribosomal subunit. Interacts with proteins S7 and S18. Binds to IF-3.

Functionally, located on the platform of the 30S subunit, it bridges several disparate RNA helices of the 16S rRNA. Forms part of the Shine-Dalgarno cleft in the 70S ribosome. The sequence is that of Small ribosomal subunit protein uS11 from Halalkalibacterium halodurans (strain ATCC BAA-125 / DSM 18197 / FERM 7344 / JCM 9153 / C-125) (Bacillus halodurans).